Here is a 790-residue protein sequence, read N- to C-terminus: Cadherin-6 (790 aa).

Positions 1–18 (MRTYRYFLLLFWVGQPYP) are cleaved as a signal peptide. Residues 19 to 53 (TFSTPLSKRTSGFPAKKRTLELSGNSKNELSRSKR) constitute a propeptide that is removed on maturation. 5 consecutive Cadherin domains span residues 54-159 (SWMW…EPIF), 160-268 (TKEV…PPRF), 269-383 (PQST…PPVF), 384-486 (SKLA…DNPP), and 487-608 (EFAE…LVHP). The Extracellular segment spans residues 54 to 615 (SWMWNQFFLL…VHPTGLSTGA (562 aa)). An N-linked (GlcNAc...) asparagine glycan is attached at asparagine 255. The tract at residues 261-291 (VNDNPPRFPQSTYQFKTPESSPPGTPIGRIK) is disordered. Over residues 269–279 (PQSTYQFKTPE) the composition is skewed to polar residues. 4 N-linked (GlcNAc...) asparagine glycosylation sites follow: asparagine 399, asparagine 437, asparagine 455, and asparagine 536. A helical membrane pass occupies residues 616–636 (LIAILLCIVTLLVTVVLFAAL). Residues 637-790 (RRQRKKEPLI…YGGVDSDKDS (154 aa)) are Cytoplasmic-facing. Serine 786 and serine 790 each carry phosphoserine.

It is found in the cell membrane. Cadherins are calcium-dependent cell adhesion proteins. They preferentially interact with themselves in a homophilic manner in connecting cells; cadherins may thus contribute to the sorting of heterogeneous cell types. This is Cadherin-6 (CDH6) from Bos taurus (Bovine).